Here is a 528-residue protein sequence, read N- to C-terminus: Beta-hexosaminidase subunit alpha (528 aa).

The N-terminal stretch at methionine 1–alanine 22 is a signal peptide. Residues leucine 23–glutamine 88 constitute a propeptide that is removed on maturation. Cysteine 58 and cysteine 104 are joined by a disulfide. Residues asparagine 115, asparagine 157, and asparagine 295 are each glycosylated (N-linked (GlcNAc...) asparagine). A disulfide bond links cysteine 277 and cysteine 328. The Proton donor role is filled by glutamate 323. The critical for hydrolysis GM2 gangliosides stretch occupies residues asparagine 422–arginine 423. Residue asparagine 487 is glycosylated (N-linked (GlcNAc...) asparagine). A disulfide bridge connects residues cysteine 504 and cysteine 521.

Belongs to the glycosyl hydrolase 20 family. As to quaternary structure, there are 3 beta-hexosaminidase isozymes: isozyme A (hexosaminidase A) is a heterodimer composed of one subunit alpha and one subunit beta (chain A and B); isozyme B (hexosaminidase B) is a homodimer of two beta subunits (two chains A and B); isozyme S (hexosaminidase S) is a homodimer of two alpha subunits. The composition of the dimer (isozyme A versus isozyme S) has a significant effect on the substrate specificity of the alpha subunit active site. Ubiquitous. Most abundant in testis, adrenal, epididymis and heart. Low levels seen in the liver.

It localises to the lysosome. It catalyses the reaction Hydrolysis of terminal non-reducing N-acetyl-D-hexosamine residues in N-acetyl-beta-D-hexosaminides.. The catalysed reaction is N-acetyl-beta-D-galactosaminyl-(1-&gt;4)-beta-D-3-sulfogalactosyl-(1-&gt;4)-beta-D-glucosyl-(1&lt;-&gt;1')-ceramide + H2O = a beta-D-3-sulfogalactosyl-(1-&gt;4)-beta-D-glucosyl-(1&lt;-&gt;1')-ceramide + N-acetyl-beta-D-galactosamine. It carries out the reaction a ganglioside GM2 (d18:1(4E)) + H2O = a ganglioside GM3 (d18:1(4E)) + N-acetyl-beta-D-galactosamine. The enzyme catalyses a ganglioside GM2 + H2O = a ganglioside GM3 + N-acetyl-beta-D-galactosamine. It catalyses the reaction beta-D-GalNAc-(1-&gt;4)-alpha-L-IdoA-(1-&gt;3)-beta-D-GalNAc-4-sulfate-(1-&gt;4)-alpha-L-IdoA-(1-&gt;3)-D-GalNAc-4-sulfate + H2O = alpha-L-IdoA-(1-&gt;3)-beta-D-GalNAc-4-sulfate-(1-&gt;4)-alpha-L-IdoA-(1-&gt;3)-D-GalNAc-4-sulfate + N-acetyl-D-galactosamine. The catalysed reaction is N-acetyl-beta-D-6-sulfogalactosaminyl-(1-&gt;4)-alpha-L-iduronyl-(1-&gt;3)-N-acetyl-D-6-sulfogalactosamine + H2O = alpha-L-iduronyl-(1-&gt;3)-N-acetyl-D-6-sulfogalactosamine + N-acetyl-D-6-sulfogalactosamine. Its activity is regulated as follows. Addition of GM2A stimulates the hydrolysis of sulfated glycosphingolipid SM2 and the ganglioside GM2. Functionally, hydrolyzes the non-reducing end N-acetyl-D-hexosamine and/or sulfated N-acetyl-D-hexosamine of glycoconjugates, such as the oligosaccharide moieties from proteins and neutral glycolipids, or from certain mucopolysaccharides. The isozyme S is as active as the isozyme A on the anionic bis-sulfated glycans, the chondroitin-6-sulfate trisaccharide (C6S-3), and the dermatan sulfate pentasaccharide, and the sulfated glycosphingolipid SM2. The isozyme B does not hydrolyze each of these substrates, however hydrolyzes efficiently neutral oligosaccharide. Only the isozyme A is responsible for the degradation of GM2 gangliosides in the presence of GM2A. This is Beta-hexosaminidase subunit alpha from Mus musculus (Mouse).